We begin with the raw amino-acid sequence, 63 residues long: Large ribosomal subunit protein bL32c (63 aa).

The disordered stretch occupies residues 38-63; that stretch reads RSFSGVSEHPKPKGFSRQQTNNRVLG. Polar residues predominate over residues 53–63; sequence SRQQTNNRVLG.

The protein belongs to the bacterial ribosomal protein bL32 family.

Its subcellular location is the plastid. The protein localises to the chloroplast. The protein is Large ribosomal subunit protein bL32c (rpl32) of Oryza sativa (Rice).